Here is a 338-residue protein sequence, read N- to C-terminus: Oxygen-dependent coproporphyrinogen-III oxidase (338 aa).

Ser104 provides a ligand contact to substrate. The a divalent metal cation site is built by His108 and His118. His118 functions as the Proton donor in the catalytic mechanism. 120–122 (NYR) provides a ligand contact to substrate. Residues His152 and His182 each contribute to the a divalent metal cation site. Positions 274-309 (YVEFNLVYDRGTIFGLQTNGRTESILMSLPPLVRWE) are important for dimerization.

It belongs to the aerobic coproporphyrinogen-III oxidase family. In terms of assembly, homodimer. The cofactor is a divalent metal cation.

It localises to the cytoplasm. The enzyme catalyses coproporphyrinogen III + O2 + 2 H(+) = protoporphyrinogen IX + 2 CO2 + 2 H2O. The protein operates within porphyrin-containing compound metabolism; protoporphyrin-IX biosynthesis; protoporphyrinogen-IX from coproporphyrinogen-III (O2 route): step 1/1. Its function is as follows. Involved in the heme and chlorophyll biosynthesis. Catalyzes the aerobic oxidative decarboxylation of propionate groups of rings A and B of coproporphyrinogen-III to yield the vinyl groups in protoporphyrinogen-IX. This is Oxygen-dependent coproporphyrinogen-III oxidase from Thermosynechococcus vestitus (strain NIES-2133 / IAM M-273 / BP-1).